Consider the following 236-residue polypeptide: Phospholipid hydroperoxide glutathione peroxidase, chloroplastic (236 aa).

The transit peptide at 1 to 64 (MASMAFSTTF…SNFPIVPSKT (64 aa)) directs the protein to the chloroplast. Cys-111 is a catalytic residue.

The protein belongs to the glutathione peroxidase family.

It localises to the plastid. It is found in the chloroplast stroma. The catalysed reaction is a hydroperoxy polyunsaturated fatty acid + 2 glutathione = a hydroxy polyunsaturated fatty acid + glutathione disulfide + H2O. In terms of biological role, protects cells and enzymes from oxidative damage, by catalyzing the reduction of hydrogen peroxide, lipid peroxides and organic hydroperoxide, by glutathione. The polypeptide is Phospholipid hydroperoxide glutathione peroxidase, chloroplastic (Pisum sativum (Garden pea)).